A 389-amino-acid chain; its full sequence is Flap endonuclease 1 (389 aa).

The N-domain stretch occupies residues 1-110 (MGIKGLMKLL…GELAKRSDRR (110 aa)). Position 35 (Asp-35) interacts with Mg(2+). DNA-binding residues include Arg-48 and Arg-76. Asp-92 contacts Mg(2+). The tract at residues 103–124 (LAKRSDRRQEAQKALEEATEKG) is disordered. The I-domain stretch occupies residues 128–259 (DIDRFNKRLV…KKAYAGIKEH (132 aa)). Positions 164, 166, 185, and 187 each coordinate Mg(2+). A DNA-binding site is contributed by Glu-164. DNA contacts are provided by Gly-237 and Asp-239. Asp-239 lines the Mg(2+) pocket. An interaction with PCNA region spans residues 350–358 (SQKRLDSFF). Residues 362 to 389 (PSANGAKKRKAPAAKGGKKAATAKKGKK) form a disordered region. Basic residues predominate over residues 367-389 (AKKRKAPAAKGGKKAATAKKGKK).

This sequence belongs to the XPG/RAD2 endonuclease family. FEN1 subfamily. As to quaternary structure, interacts with PCNA. Three molecules of FEN1 bind to one PCNA trimer with each molecule binding to one PCNA monomer. PCNA stimulates the nuclease activity without altering cleavage specificity. The cofactor is Mg(2+). In terms of processing, phosphorylated. Phosphorylation upon DNA damage induces relocalization to the nuclear plasma.

The protein localises to the nucleus. It is found in the nucleolus. The protein resides in the nucleoplasm. It localises to the mitochondrion. Structure-specific nuclease with 5'-flap endonuclease and 5'-3' exonuclease activities involved in DNA replication and repair. During DNA replication, cleaves the 5'-overhanging flap structure that is generated by displacement synthesis when DNA polymerase encounters the 5'-end of a downstream Okazaki fragment. It enters the flap from the 5'-end and then tracks to cleave the flap base, leaving a nick for ligation. Also involved in the long patch base excision repair (LP-BER) pathway, by cleaving within the apurinic/apyrimidinic (AP) site-terminated flap. Acts as a genome stabilization factor that prevents flaps from equilibrating into structures that lead to duplications and deletions. Also possesses 5'-3' exonuclease activity on nicked or gapped double-stranded DNA, and exhibits RNase H activity. Also involved in replication and repair of rDNA and in repairing mitochondrial DNA. The protein is Flap endonuclease 1 of Phytophthora infestans (strain T30-4) (Potato late blight agent).